The primary structure comprises 156 residues: Small ribosomal subunit protein uS7 (156 aa).

The protein belongs to the universal ribosomal protein uS7 family. In terms of assembly, part of the 30S ribosomal subunit. Contacts proteins S9 and S11.

In terms of biological role, one of the primary rRNA binding proteins, it binds directly to 16S rRNA where it nucleates assembly of the head domain of the 30S subunit. Is located at the subunit interface close to the decoding center, probably blocks exit of the E-site tRNA. The chain is Small ribosomal subunit protein uS7 from Roseobacter denitrificans (strain ATCC 33942 / OCh 114) (Erythrobacter sp. (strain OCh 114)).